The chain runs to 261 residues: ATP synthase subunit a (261 aa).

Transmembrane regions (helical) follow at residues 45–65 (ITNV…ILVL), 107–127 (VMTL…PLSF), 133–153 (MAVT…LGFM), 162–182 (MFWV…IEVI), 209–229 (IAGF…VTAI), and 232–252 (LELL…CVYL).

The protein belongs to the ATPase A chain family. F-type ATPases have 2 components, CF(1) - the catalytic core - and CF(0) - the membrane proton channel. CF(1) has five subunits: alpha(3), beta(3), gamma(1), delta(1), epsilon(1). CF(0) has four main subunits: a, b, b' and c.

It is found in the cell inner membrane. Its function is as follows. Key component of the proton channel; it plays a direct role in the translocation of protons across the membrane. This Cereibacter sphaeroides (strain ATCC 17029 / ATH 2.4.9) (Rhodobacter sphaeroides) protein is ATP synthase subunit a.